Here is a 301-residue protein sequence, read N- to C-terminus: Nodulation protein D 3 (301 aa).

Residues L6–T63 form the HTH lysR-type domain. Positions L23 to R43 form a DNA-binding region, H-T-H motif.

This sequence belongs to the LysR transcriptional regulatory family.

Functionally, nodD regulates the expression of the nodABCFE genes which encode other nodulation proteins. NodD is also a negative regulator of its own expression. Binds flavonoids as inducers. This chain is Nodulation protein D 3 (nodD3), found in Mesorhizobium japonicum (strain LMG 29417 / CECT 9101 / MAFF 303099) (Mesorhizobium loti (strain MAFF 303099)).